The following is a 78-amino-acid chain: Short neurotoxin SNTX14 (78 aa).

An N-terminal signal peptide occupies residues 1–21 (MKTLLLTFLVVTIVCLDLGYT). Disulfide bonds link C24/C40, C33/C58, C62/C70, and C71/C76.

This sequence belongs to the three-finger toxin family. Short-chain subfamily. As to expression, expressed by the venom gland.

The protein localises to the secreted. In terms of biological role, this three-finger toxin binds and inhibits the nicotinic acetylcholine receptor (nAChR). The polypeptide is Short neurotoxin SNTX14 (Ophiophagus hannah (King cobra)).